The primary structure comprises 382 residues: Chaperone protein DnaJ (382 aa).

Residues 6–70 (DYYEILGLPK…EKRAQYDRFG (65 aa)) form the J domain. Residues 131–213 (GVRKDIDIPR…CGGAGRVRNK (83 aa)) form a CR-type zinc finger. Cys144, Cys147, Cys161, Cys164, Cys187, Cys190, Cys201, and Cys204 together coordinate Zn(2+). CXXCXGXG motif repeat units follow at residues 144–151 (CSTCSGTG), 161–168 (CPTCGGTG), 187–194 (CSTCHGRG), and 201–208 (CPVCGGAG). The segment at 146–168 (TCSGTGAKPGTSPKRCPTCGGTG) is disordered. The tract at residues 348–382 (FENLSKGKKPQEEEKSKAEKHKKGIFEKVKDAFES) is disordered. Over residues 371–382 (GIFEKVKDAFES) the composition is skewed to basic and acidic residues.

The protein belongs to the DnaJ family. As to quaternary structure, homodimer. Requires Zn(2+) as cofactor.

It is found in the cytoplasm. Its function is as follows. Participates actively in the response to hyperosmotic and heat shock by preventing the aggregation of stress-denatured proteins and by disaggregating proteins, also in an autonomous, DnaK-independent fashion. Unfolded proteins bind initially to DnaJ; upon interaction with the DnaJ-bound protein, DnaK hydrolyzes its bound ATP, resulting in the formation of a stable complex. GrpE releases ADP from DnaK; ATP binding to DnaK triggers the release of the substrate protein, thus completing the reaction cycle. Several rounds of ATP-dependent interactions between DnaJ, DnaK and GrpE are required for fully efficient folding. Also involved, together with DnaK and GrpE, in the DNA replication of plasmids through activation of initiation proteins. In Methanosarcina acetivorans (strain ATCC 35395 / DSM 2834 / JCM 12185 / C2A), this protein is Chaperone protein DnaJ.